Consider the following 394-residue polypeptide: Elongation factor Tu 2 (394 aa).

In terms of domain architecture, tr-type G spans 10–204 (KPHVNVGTIG…ALDSYIPQPE (195 aa)). The tract at residues 19–26 (GHVDHGKT) is G1. 19 to 26 (GHVDHGKT) lines the GTP pocket. Position 26 (T26) interacts with Mg(2+). The G2 stretch occupies residues 60–64 (GITIN). The G3 stretch occupies residues 81–84 (DCPG). Residues 81–85 (DCPGH) and 136–139 (NKCD) each bind GTP. Residues 136 to 139 (NKCD) form a G4 region. The interval 174-176 (SAL) is G5.

It belongs to the TRAFAC class translation factor GTPase superfamily. Classic translation factor GTPase family. EF-Tu/EF-1A subfamily. Monomer.

Its subcellular location is the cytoplasm. It carries out the reaction GTP + H2O = GDP + phosphate + H(+). Functionally, GTP hydrolase that promotes the GTP-dependent binding of aminoacyl-tRNA to the A-site of ribosomes during protein biosynthesis. This Yersinia pestis bv. Antiqua (strain Antiqua) protein is Elongation factor Tu 2.